A 156-amino-acid polypeptide reads, in one-letter code: Deoxyuridine 5'-triphosphate nucleotidohydrolase (156 aa).

Residues 76–78, N89, 93–95, and K103 contribute to the substrate site; these read RSG and TVD.

It belongs to the dUTPase family. It depends on Mg(2+) as a cofactor.

It catalyses the reaction dUTP + H2O = dUMP + diphosphate + H(+). It participates in pyrimidine metabolism; dUMP biosynthesis; dUMP from dCTP (dUTP route): step 2/2. In terms of biological role, this enzyme is involved in nucleotide metabolism: it produces dUMP, the immediate precursor of thymidine nucleotides and it decreases the intracellular concentration of dUTP so that uracil cannot be incorporated into DNA. The chain is Deoxyuridine 5'-triphosphate nucleotidohydrolase from Rhizobium etli (strain ATCC 51251 / DSM 11541 / JCM 21823 / NBRC 15573 / CFN 42).